Reading from the N-terminus, the 2380-residue chain is MDNSYLNNPQFDINNGNKEVTDDDNNKNNQDNLVAIVGVGFRLPSGENERNNTPQALWNNLINGFDGVVKTSERFNDNFFKNHEIANNYSGLLPLDEVKSFDPLFFGITPNEAQTIDPHQRLLLKCTWEALEDSLIDPISIKGTDTSVFIGSSTNDYLTLNRNEVKSNVFGSMAHSIANRVSYCYDLHGNSITLDTACSSSLNAIALGYDSIKNKKSKMSIVGGVNILLDPYPYKAFSILNMLSKSNGRCKSFDASADGFVRGECIGVVILKNLKDAIKDGNRIYCTINGASANVDGIGYSDKSNFYSPSSISQSENLKNAIQSTNGTVKPSDIDYVEAHGTGTPNGDPVETEGISKVFKDTRSTDTPLLIGSFKSNIGHCEAASGIASLIKCCLMYKNKCFAPNIHFKTPNPAIKFKEWNLKVVTEPIPFNENKNTSMIINNFGVTGSNCCLVLSQFNNTNKQKQQMKTKINNYLIPFSANSVESLKKYQSLIINSKENELKYSFEEFVKNQVFIKPTSLYQRSVIVAKDWNDFNNVENQVKYQTSSSTSSNITITNKNNNPITVFVFCGQGSQYNTMALELYKNEKVFRNSMDMLDNKMKNYFGYSILEKLRAIQDSDKRSVHEQTMAQPSTVIIQVSLYELYKHWGIKASFMLGHSLGEVTTAYCSGMIDIDQLCYLIYHRSTLQIRTNGLGKMLSINISSDEYKTNYMSRYPTIEIACYNSPSSIVIAGNEQILNEISKELKEKEIFSAMLGSLSSFHTSSQNIIKDDILNLNIQSSQPVIPTFSTVTSNLFNESTIFDSEYFFDNISKPVSFTQTISNLYKHIEDNQIGSNIVFIEIAPHPTLSFYLKQMIPKQSQYFRNGESISVYSTLHKKKNDVEEFQKSISQLFCDDAYDINFKCQFNNINSNIEAISNFNLPLYQWDDQHYWLNKSIEHKNNLIGPPISILGNSMQDSNPFIKSYQTIIDTGKDAFKYLKGHNVSDKCYFPGAGYIDNLLKLYPNQDLTINSIEFKTPLILSDDNGQFLQTNVYQTGKSDYRAQFHFKDNRTNVWVQTCTANFQLYNNGKVDKLNLEEIKSTKCNLSSIPWDKFYPHIKNRTGLNYKDKFQNTIECYLGDNCSLTEISLELPENFHDQESFFNTPILDICFHGSIVLIKDNCKLVLDKIDGFKLYTSNIPKNRFDHLSIFVYTTMKSTKSNSYNSTYTVMLEDGTVILEVENLICTSLTPVKDPLLIEIPTDMYYTPYLQSKDSQIQSPLEFKSIYQNNQDNDSLLIPNVVLETIKPLINEQMEFRILEFGGNNLSNSTLLLNSINSLLEENPHYEIDIEYTWSDNNSSILKDAKLELSKVDKGYLSILYRSLGLDVDNSLLEKQKLNPSYYDLIIVSNISNLTKDIKYSLNQIYQILTPNGNLIINEQQPNNENNENNEDSLKNLLVNCNFNSDIMMKSSSVSDSDIKSIIIQAQKPSLKLQPKTINTFDQVILYCNQDEQFQQQQQLINKFESHYNNNCKIIKVSTIEEFYKLSTTITNNSIIYFIKSIEQLTLENFKSITFEYVQINQKLYEFKSKCTHVLITYDSQSSNYLSSSILGAARYFDEIPTLQLFTFDFDKDSLINLDISVIDHLIDPKQNTLIEFFIKKNGKVYFERFKKGLKKNSFKSESYHQITNEQEILISKLDENLDYQLKSKDSILKPYDIEVEIKATGLNYKDYLVYSGLIKLKGDSVDFGLDFSGRVSRVGIKSSKEFKVGDEVYGIGQSTSSSHIIIDSMHACHKPSKITHVQAASIPAVYATSIHSLYNIGNLREGESILIHSGSGGVGLSALEILKSNNHSSPIFVTVGSEEKKQYLINTYGNLITGIYSTRDTNYQKQIKNKLIELGYETHGVDLIINTLSSEFMDSNFKCLNPEGRIVDLTITHLNPNEFIDNNKFKYNFGYHNIELYYCEKPTIKKLLQSISKSIENNTLNYLIPITEFSNSNIKKAIEYINERKHVGKIVISHDTDITNKLIENQPKIDYSLLKSNYKIKNLGKNVLVTGQTGLILDIINWIMKYNSTVENIIILSKSSMKWEMEFLINNNKTKIKFYYKRCDIGGDSDSINKTFDKLFTENPTITNIDSIFHFAVVQITRKVKDIDMKSLNISHDAKTIGAINLHNQSIKRDWKLSNFILASSILSKVGSLDQCGYVSACCVLDSFSKYRLSIGLPALSINIGAMGGSGMVARSELVETVLNGQGYNLTSTNQLLGTIDLLIQNPGQESNNLMVGNFNFPVFNNFKQKIHQKFDFIFNALDSNSENGDGSNIKNSTNIKDKFLNKVSEFLSIDSSKINNDIKLMNYGADSLITVQLKNWVDKEWSPNLITIHQIQSNSIGMVCQIINDNFEKKK.

The segment covering 1–18 has biased composition (polar residues); the sequence is MDNSYLNNPQFDINNGNK. Residues 1–29 form a disordered region; sequence MDNSYLNNPQFDINNGNKEVTDDDNNKNN. In terms of domain architecture, Ketosynthase family 3 (KS3) spans 31–457; sequence DNLVAIVGVG…GSNCCLVLSQ (427 aa). Active-site for beta-ketoacyl synthase activity residues include C198, H340, and H380. Residues 649–682 form an acyl/malonyl transferase region; sequence GIKASFMLGHSLGEVTTAYCSGMIDIDQLCYLIY. The active-site For acyl/malonyl transferase activity is the S659. The segment at 948–1070 is N-terminal hotdog fold; sequence ISILGNSMQD…ANFQLYNNGK (123 aa). One can recognise a PKS/mFAS DH domain in the interval 948–1234; that stretch reads ISILGNSMQD…CTSLTPVKDP (287 aa). H982 serves as the catalytic Proton acceptor; for dehydratase activity. The interval 1085-1234 is C-terminal hotdog fold; the sequence is NLSSIPWDKF…CTSLTPVKDP (150 aa). D1148 functions as the Proton donor; for dehydratase activity in the catalytic mechanism. In terms of domain architecture, Carrier spans 2299-2376; that stretch reads KNSTNIKDKF…MVCQIINDNF (78 aa). S2336 carries the O-(pantetheine 4'-phosphoryl)serine modification.

It depends on pantetheine 4'-phosphate as a cofactor.

Functionally, probable polyketide synthase. The chain is Probable polyketide synthase 25 (pks25) from Dictyostelium discoideum (Social amoeba).